Here is a 463-residue protein sequence, read N- to C-terminus: Cis-zeatin O-glucosyltransferase 2 (463 aa).

Histidine 21 functions as the Proton acceptor in the catalytic mechanism. The an anthocyanidin site is built by histidine 21 and asparagine 91. Aspartate 127 serves as the catalytic Charge relay. UDP-alpha-D-glucose contacts are provided by alanine 339, glutamine 341, histidine 356, tryptophan 359, asparagine 360, serine 361, glutamate 364, aspartate 380, and glutamine 381.

It belongs to the UDP-glycosyltransferase family. As to expression, highly expressed in root. Expressed at much lower level in kernel. Weakly or not expressed in expressed in stems and leaves.

The catalysed reaction is cis-zeatin + UDP-alpha-D-glucose = O-beta-D-glucosyl-cis-zeatin + UDP + H(+). Utilizes UDP-glucose as the sugar donor and catalyzes the formation of O-beta-D-glucosyl-cis-zeatin from cis-zeatin. May regulate active versus storage forms of cytokinins and could have an impact on seed growth. The protein is Cis-zeatin O-glucosyltransferase 2 of Zea mays (Maize).